Here is a 35-residue protein sequence, read N- to C-terminus: Pheromone-binding protein 1 (35 aa).

The protein belongs to the PBP/GOBP family. Homodimer. In terms of tissue distribution, antenna.

Its function is as follows. This major soluble protein in olfactory sensilla of male moths might serve to solubilize the extremely hydrophobic pheromone molecules and to transport pheromone through the aqueous lymph to receptors located on olfactory cilia. The sequence is that of Pheromone-binding protein 1 from Lymantria dispar (Gypsy moth).